The chain runs to 473 residues: GTPase Der (473 aa).

2 EngA-type G domains span residues 3–167 (FTVA…GKDR) and 203–378 (LRVA…RVWN). GTP contacts are provided by residues 9–16 (GRPNVGKS), 56–60 (DTAGL), 119–122 (NKSE), 209–216 (GRPNAGKS), 256–260 (DTAGM), and 321–324 (NKWD). A KH-like domain is found at 379 to 463 (KRISTARLNR…PIRIHFRSAE (85 aa)).

Belongs to the TRAFAC class TrmE-Era-EngA-EngB-Septin-like GTPase superfamily. EngA (Der) GTPase family. Associates with the 50S ribosomal subunit.

Its function is as follows. GTPase that plays an essential role in the late steps of ribosome biogenesis. This is GTPase Der from Rhizobium etli (strain CIAT 652).